Here is a 1052-residue protein sequence, read N- to C-terminus: SE-cephalotoxin (1052 aa).

An N-terminal signal peptide occupies residues 1–21 (MMGTSRCVILLFALLLWAANA). The propeptide occupies 22 to 29 (APPEIHTT). N-linked (GlcNAc...) asparagine glycosylation is present at Asn-41. The stretch at 130–194 (TGVNRKLDQI…DMNKRRLMAE (65 aa)) forms a coiled coil. Asn-353 is a glycosylation site (N-linked (GlcNAc...) asparagine). In terms of domain architecture, EGF-like spans 460 to 497 (PGNPCNHGCNGHGECKVVPYTDQFQCFCHGNYEGKMCQ). 3 cysteine pairs are disulfide-bonded: Cys-464–Cys-474, Cys-468–Cys-485, and Cys-487–Cys-496. Residues Asn-576 and Asn-715 are each glycosylated (N-linked (GlcNAc...) asparagine). A Sushi domain is found at 709 to 769 (TSCPPLNVTH…QWSATPKCES (61 aa)). 7 disulfides stabilise this stretch: Cys-711–Cys-752, Cys-739–Cys-767, Cys-780–Cys-814, Cys-784–Cys-820, Cys-795–Cys-804, Cys-829–Cys-847, and Cys-841–Cys-858. Positions 768–821 (ESSWSRWSKWSACASTCGNATQSRRRRCLGQSESEKCIGPSKQVRKCFVEDCCQ) constitute a TSP type-1 domain. Asn-786 is a glycosylation site (N-linked (GlcNAc...) asparagine). The region spanning 819–859 (CCQEKYGKFKCDNNKCISLSRVCDGNDDCRNAEDESKSRCK) is the LDL-receptor class A domain.

Monomer. In terms of tissue distribution, expressed by the salivary gland.

The protein localises to the secreted. The protein is SE-cephalotoxin of Acanthosepion esculentum (Golden cuttlefish).